Here is a 316-residue protein sequence, read N- to C-terminus: Ribosomal protein L11 methyltransferase (316 aa).

4 residues coordinate S-adenosyl-L-methionine: T161, G182, D204, and N249.

Belongs to the methyltransferase superfamily. PrmA family.

It localises to the cytoplasm. The catalysed reaction is L-lysyl-[protein] + 3 S-adenosyl-L-methionine = N(6),N(6),N(6)-trimethyl-L-lysyl-[protein] + 3 S-adenosyl-L-homocysteine + 3 H(+). Methylates ribosomal protein L11. The sequence is that of Ribosomal protein L11 methyltransferase from Ruminiclostridium cellulolyticum (strain ATCC 35319 / DSM 5812 / JCM 6584 / H10) (Clostridium cellulolyticum).